The primary structure comprises 429 residues: Adenylosuccinate synthetase (429 aa).

Residues 12–18 (GDEGKGK) and 40–42 (GHT) contribute to the GTP site. The active-site Proton acceptor is the D13. 2 residues coordinate Mg(2+): D13 and G40. IMP is bound by residues 13–16 (DEGK), 38–41 (NAGH), T129, R143, Q223, T238, and R302. H41 acts as the Proton donor in catalysis. Substrate is bound at residue 298-304 (TVTGRKR). GTP contacts are provided by residues R304, 330–332 (KLD), and 412–414 (STS).

Belongs to the adenylosuccinate synthetase family. In terms of assembly, homodimer. Requires Mg(2+) as cofactor.

The protein localises to the cytoplasm. The catalysed reaction is IMP + L-aspartate + GTP = N(6)-(1,2-dicarboxyethyl)-AMP + GDP + phosphate + 2 H(+). Its pathway is purine metabolism; AMP biosynthesis via de novo pathway; AMP from IMP: step 1/2. In terms of biological role, plays an important role in the de novo pathway of purine nucleotide biosynthesis. Catalyzes the first committed step in the biosynthesis of AMP from IMP. This chain is Adenylosuccinate synthetase, found in Rhizorhabdus wittichii (strain DSM 6014 / CCUG 31198 / JCM 15750 / NBRC 105917 / EY 4224 / RW1) (Sphingomonas wittichii).